A 145-amino-acid polypeptide reads, in one-letter code: MTIDITEIMDLIPHRYPFLLVDKVVEIDPNKSITGIKNVTVNEPQFTGHFPARPVMPGVLMVEAMAQLAAILVAKSLGSTKNKEVFLMAIENSKFRKVVQPGDTMHIHATIDQQRANVWKFSSTVKVDGEMAAESKFTAMIKDKS.

His-49 is an active-site residue.

Belongs to the thioester dehydratase family. FabZ subfamily.

The protein localises to the cytoplasm. It catalyses the reaction a (3R)-hydroxyacyl-[ACP] = a (2E)-enoyl-[ACP] + H2O. Functionally, involved in unsaturated fatty acids biosynthesis. Catalyzes the dehydration of short chain beta-hydroxyacyl-ACPs and long chain saturated and unsaturated beta-hydroxyacyl-ACPs. The chain is 3-hydroxyacyl-[acyl-carrier-protein] dehydratase FabZ from Rickettsia bellii (strain RML369-C).